The following is a 334-amino-acid chain: N-acetyl-gamma-glutamyl-phosphate reductase (334 aa).

Residue Cys-154 is part of the active site.

Belongs to the NAGSA dehydrogenase family. Type 1 subfamily.

The protein localises to the cytoplasm. The enzyme catalyses N-acetyl-L-glutamate 5-semialdehyde + phosphate + NADP(+) = N-acetyl-L-glutamyl 5-phosphate + NADPH + H(+). The protein operates within amino-acid biosynthesis; L-arginine biosynthesis; N(2)-acetyl-L-ornithine from L-glutamate: step 3/4. Its function is as follows. Catalyzes the NADPH-dependent reduction of N-acetyl-5-glutamyl phosphate to yield N-acetyl-L-glutamate 5-semialdehyde. This chain is N-acetyl-gamma-glutamyl-phosphate reductase, found in Pectobacterium carotovorum subsp. carotovorum (strain PC1).